The sequence spans 292 residues: Ephrin type-A receptor 4a (292 aa).

Residues 1–9 (IGIGEFGEV) and lysine 27 contribute to the ATP site. Residues 1 to 265 (IGIGEFGEVC…QIVNMLDKLI (265 aa)) form the Protein kinase domain. Aspartate 120 (proton acceptor) is an active-site residue. Tyrosine 153 bears the Phosphotyrosine; by autocatalysis mark.

The protein belongs to the protein kinase superfamily. Tyr protein kinase family. Ephrin receptor subfamily. Widely expressed in the developing nervous system.

It localises to the cell membrane. The protein resides in the early endosome. It catalyses the reaction L-tyrosyl-[protein] + ATP = O-phospho-L-tyrosyl-[protein] + ADP + H(+). Its function is as follows. Receptor tyrosine kinase which binds membrane-bound ephrin family ligands residing on adjacent cells, leading to contact-dependent bidirectional signaling into neighboring cells. The signaling pathway downstream of the receptor is referred to as forward signaling while the signaling pathway downstream of the ephrin ligand is referred to as reverse signaling. Highly promiscuous, it has the unique property among Eph receptors to bind and to be physiologically activated by both GPI-anchored ephrin-A and transmembrane ephrin-B ligands including efna1 and efnb3. Upon activation by ephrin ligands, modulates cell morphology and integrin-dependent cell adhesion through regulation of the Rac, Rap and Rho GTPases activity. Plays an important role in the development of the nervous system controlling different steps of axonal guidance including the establishment of the corticospinal projections. The polypeptide is Ephrin type-A receptor 4a (epha4a) (Danio rerio (Zebrafish)).